The following is a 181-amino-acid chain: ATP-dependent protease subunit HslV (181 aa).

The active site involves threonine 7. The Na(+) site is built by alanine 166, cysteine 169, and threonine 172.

It belongs to the peptidase T1B family. HslV subfamily. In terms of assembly, a double ring-shaped homohexamer of HslV is capped on each side by a ring-shaped HslU homohexamer. The assembly of the HslU/HslV complex is dependent on binding of ATP.

The protein localises to the cytoplasm. It catalyses the reaction ATP-dependent cleavage of peptide bonds with broad specificity.. Allosterically activated by HslU binding. Functionally, protease subunit of a proteasome-like degradation complex believed to be a general protein degrading machinery. The protein is ATP-dependent protease subunit HslV of Anaeromyxobacter dehalogenans (strain 2CP-1 / ATCC BAA-258).